Consider the following 200-residue polypeptide: Exopolysaccharide production protein PSS (200 aa).

This sequence belongs to the bacterial sugar transferase family.

This Rhizobium leguminosarum bv. phaseoli protein is Exopolysaccharide production protein PSS (pss).